The sequence spans 455 residues: GTPase Der (455 aa).

EngA-type G domains are found at residues 4 to 169 (PVVA…PPKD) and 178 to 353 (IQMA…EQHR). GTP contacts are provided by residues 10–17 (GRPNVGKS), 57–61 (DTGGL), 120–123 (NKCE), 184–191 (GRPNVGKS), 231–235 (DTAGI), and 296–299 (NKWD). The 86-residue stretch at 354-439 (RRVSTSVVNE…PLRLFWRGKQ (86 aa)) folds into the KH-like domain.

It belongs to the TRAFAC class TrmE-Era-EngA-EngB-Septin-like GTPase superfamily. EngA (Der) GTPase family. As to quaternary structure, associates with the 50S ribosomal subunit.

Functionally, GTPase that plays an essential role in the late steps of ribosome biogenesis. This Synechococcus sp. (strain CC9605) protein is GTPase Der.